Reading from the N-terminus, the 46-residue chain is Aspartate aminotransferase 1 (46 aa).

It belongs to the class-I pyridoxal-phosphate-dependent aminotransferase family. Homodimer. Requires pyridoxal 5'-phosphate as cofactor.

The enzyme catalyses L-aspartate + 2-oxoglutarate = oxaloacetate + L-glutamate. Important for the metabolism of amino acids and Krebs-cycle related organic acids. In plants, it is involved in nitrogen metabolism and in aspects of carbon and energy metabolism. This is Aspartate aminotransferase 1 from Pseudotsuga menziesii (Douglas-fir).